The primary structure comprises 200 residues: Arylesterase (200 aa).

A signal peptide spans 1–19; that stretch reads MIRLLSLVLFFCLSAASQA. Ser-29 acts as the Nucleophile in catalysis. Active-site residues include Asp-176 and His-179.

The protein belongs to the 'GDSL' lipolytic enzyme family. In terms of assembly, homodimer.

It catalyses the reaction a phenyl acetate + H2O = a phenol + acetate + H(+). Its function is as follows. Favors the hydrolysis of several arylesters. In Vibrio mimicus, this protein is Arylesterase.